Here is a 295-residue protein sequence, read N- to C-terminus: MTDYLVRAIAKSGSVRALACVTTATVGAICKRHDTLPTATAALGRGITAGALMGALLKTGQRVAMRFEGNGPLKKIVIEADANGSVRGYVGDPKVHLLRPDGALDVNNALGRAGFLTVAKDLGLKEPYRGTVQLYTSGIAEDLALYLVESEQIPSAVGIAEFIEQDGTVAAAGGFLIQAVPPVDPLVIEELMTRIEQLPPLSELLHKGGNPEQILEQLLAGIPYDILEKRNIAFACSCSRERIERVLLSMGKKELSSMKKDQHGSEVTCEFCGEHYLFDEADLDRIIAEIAKQEG.

2 disulfides stabilise this stretch: cysteine 236–cysteine 238 and cysteine 269–cysteine 272.

This sequence belongs to the HSP33 family. Post-translationally, under oxidizing conditions two disulfide bonds are formed involving the reactive cysteines. Under reducing conditions zinc is bound to the reactive cysteines and the protein is inactive.

It localises to the cytoplasm. Its function is as follows. Redox regulated molecular chaperone. Protects both thermally unfolding and oxidatively damaged proteins from irreversible aggregation. Plays an important role in the bacterial defense system toward oxidative stress. The sequence is that of 33 kDa chaperonin from Citrifermentans bemidjiense (strain ATCC BAA-1014 / DSM 16622 / JCM 12645 / Bem) (Geobacter bemidjiensis).